We begin with the raw amino-acid sequence, 710 residues long: Bifunctional sesterterpene synthase (710 aa).

The segment at 1–327 is stellata-2,6,19-trien synthase; sequence MEFKFSAVVD…RYYTDASFSE (327 aa). Residues Asp-92 and Asp-96 each contribute to the Mg(2+) site. Residues Asp-92, Asp-96, 181-184, and 229-233 each bind substrate; these read RVHD and SWDKE. Positions 92–96 match the DDXXD motif 1 motif; it reads DDVTD. Residues 278 to 286 carry the NSE motif motif; sequence YLRVFEEVK. 318 to 319 lines the substrate pocket; that stretch reads RY. Positions 328 to 709 are geranylgeranyl diphosphate synthase; it reads RQLEWMKNGI…LRLIFELLRN (382 aa). Residues 365–404 form a disordered region; that stretch reads HHAVTSNGTGTGSHDTLNGDGTAHENNSRDASIPGRTTNG. Residues 368–380 are compositionally biased toward polar residues; it reads VTSNGTGTGSHDT. 3 residues coordinate isopentenyl diphosphate: Lys-430, Arg-433, and His-462. Residues Asp-469 and Asp-473 each coordinate Mg(2+). Positions 469–473 match the DDXXD motif 2 motif; that stretch reads DDLED. Position 478 (Arg-478) interacts with dimethylallyl diphosphate. Isopentenyl diphosphate is bound at residue Arg-479. Residues Lys-556, Thr-557, Gln-592, Asn-599, Lys-609, and Lys-619 each coordinate dimethylallyl diphosphate.

It in the C-terminal section; belongs to the FPP/GGPP synthase family. This sequence in the N-terminal section; belongs to the terpene synthase family. In terms of assembly, hexamer.

It catalyses the reaction 4 isopentenyl diphosphate + dimethylallyl diphosphate = (2E,6E,10E,14E)-geranylfarnesyl diphosphate + 4 diphosphate. It carries out the reaction (2E,6E,10E,14E)-geranylfarnesyl diphosphate = variecoladiene + diphosphate. It functions in the pathway secondary metabolite biosynthesis; terpenoid biosynthesis. Multifunctional sesterterpene synthase; part of the gene cluster that mediates the biosynthesis of the sesterterpene variecolin. The first step in the pathway is performed by the variecoladiene synthase vrcA that possesses both prenyl transferase and terpene cyclase activity, converting isopentenyl diphosphate and dimethylallyl diphosphate into geranylfarnesyl pyrophosphate (GFPP) and then converting GFPP into the tetracyclic variecoladiene. The cytochrome P450 monooxygenase vrcB then catalyzes multiple oxidations at C-5 and C-20 positions to yield variecolin. This is Bifunctional sesterterpene synthase from Aspergillus aculeatus (strain ATCC 16872 / CBS 172.66 / WB 5094).